We begin with the raw amino-acid sequence, 250 residues long: MAVVHSAPKYASNDGVRGTLVKALGDYVAASHEKYGEIIITVERDAIEDVLRTLRDDHDYQQLMEIAGVDYPERPERFEVVYMLLSLTKNHRVMVKVSTDEKTPVPTVTTLWPNAGWLEREVFDLYGVLFDGNTDLRRILTDYGFEGHPFRKDFPLTGYTELRYSEEEQRVVYEPVELAQDLRTFDFLSPWEGMTPPLPGDEKADMPPIDDPMVTEGPEDTGAGARANAKAAEGTPADPPAMDDEEEDDA.

Residues 193 to 250 (GMTPPLPGDEKADMPPIDDPMVTEGPEDTGAGARANAKAAEGTPADPPAMDDEEEDDA) form a disordered region. Low complexity predominate over residues 222 to 236 (GAGARANAKAAEGTP). A compositionally biased stretch (acidic residues) spans 241–250 (AMDDEEEDDA).

Belongs to the complex I 30 kDa subunit family. As to quaternary structure, NDH-1 is composed of 14 different subunits. Subunits NuoB, C, D, E, F, and G constitute the peripheral sector of the complex.

The protein localises to the cell inner membrane. It catalyses the reaction a quinone + NADH + 5 H(+)(in) = a quinol + NAD(+) + 4 H(+)(out). Functionally, NDH-1 shuttles electrons from NADH, via FMN and iron-sulfur (Fe-S) centers, to quinones in the respiratory chain. The immediate electron acceptor for the enzyme in this species is believed to be ubiquinone. Couples the redox reaction to proton translocation (for every two electrons transferred, four hydrogen ions are translocated across the cytoplasmic membrane), and thus conserves the redox energy in a proton gradient. This chain is NADH-quinone oxidoreductase subunit C, found in Erythrobacter litoralis (strain HTCC2594).